The sequence spans 200 residues: Holliday junction resolvase RecU (200 aa).

Mg(2+) contacts are provided by Thr-82, Asp-84, Glu-97, and Gln-116.

This sequence belongs to the RecU family. Requires Mg(2+) as cofactor.

The protein localises to the cytoplasm. It carries out the reaction Endonucleolytic cleavage at a junction such as a reciprocal single-stranded crossover between two homologous DNA duplexes (Holliday junction).. Endonuclease that resolves Holliday junction intermediates in genetic recombination. Cleaves mobile four-strand junctions by introducing symmetrical nicks in paired strands. Promotes annealing of linear ssDNA with homologous dsDNA. Required for DNA repair, homologous recombination and chromosome segregation. The polypeptide is Holliday junction resolvase RecU (Streptococcus gordonii (strain Challis / ATCC 35105 / BCRC 15272 / CH1 / DL1 / V288)).